Here is a 546-residue protein sequence, read N- to C-terminus: Serine/threonine-protein kinase Chk2 (546 aa).

The segment at 1 to 70 is disordered; the sequence is MKSHHQSHSS…SSHSSSGTLS (70 aa). Residues 8–70 show a composition bias toward low complexity; the sequence is HSSTSSKAHD…SSHSSSGTLS (63 aa). Threonine 68 is modified (phosphothreonine; by MAP3K20). At serine 71 the chain carries Phosphoserine; by PLK3. Threonine 77 is modified (phosphothreonine; by ATM and MAP3K20). Phosphoserine; by PLK3 is present on serine 82. One can recognise an FHA domain in the interval 117–179; sequence YWFGRDKSCE…NGTFVNTELI (63 aa). Residues 224–490 form the Protein kinase domain; the sequence is YIMSKTLGSG…TEEALNHPWL (267 aa). ATP-binding positions include 231–238, lysine 253, and 306–312; these read GSGACGEV and ELMEGGE. Aspartate 351 functions as the Proton acceptor in the catalytic mechanism. ATP contacts are provided by residues 355–356 and aspartate 372; that span reads EN. A T-loop/activation segment region spans residues 372–398; the sequence is DFGQSKILGETSLMRTLCGTPTYLAPE. Serine 383 is modified (phosphoserine; by autocatalysis). Phosphothreonine; by autocatalysis is present on residues threonine 387 and threonine 391. Phosphoserine is present on serine 460.

The protein belongs to the protein kinase superfamily. CAMK Ser/Thr protein kinase family. CHK2 subfamily. Homodimer. Homodimerization is part of the activation process but the dimer may dissociate following activation. Interacts with PML. Interacts with TP53. Interacts with RB1; phosphorylates RB1. Interacts with BRCA1. Interacts (phosphorylated at Thr-68) with MDC1; requires ATM-mediated phosphorylation of CHEK2. Interacts with TP53BP1; modulates CHEK2 phosphorylation at Thr-68 in response to ionizing radiation. Interacts with CDC25A; phosphorylates CDC25A and mediates its degradation in response to ionizing radiation. Interacts with CUL1; mediates CHEK2 ubiquitination and regulation. Interacts with CDKN2AIP. Interacts (via protein kinase domain) with CCAR2 (via N-terminus). Interacts with SIRT1. Mg(2+) serves as cofactor. In terms of processing, phosphorylated. Phosphorylated at Ser-82 by PLK3 in response to DNA damage, promoting phosphorylation at Thr-77 by ATM and the G2/M transition checkpoint. Phosphorylation at Thr-77 induces homodimerization. Autophosphorylates at Thr-387 and Thr-391 in the T-loop/activation segment upon dimerization to become fully active. DNA damage-induced autophosphorylation at Ser-383 induces CUL1-mediated ubiquitination and regulates the pro-apoptotic function. Phosphorylation at Ser-460 also regulates ubiquitination. Phosphorylated by PLK4. Post-translationally, ubiquitinated. CUL1-mediated ubiquitination regulates the pro-apoptotic function. Ubiquitination may also regulate protein stability. Ubiquitinated by RNF8 via 'Lys-48'-linked ubiquitination. Ubiquitously expressed with higher levels in the thymus, spleen and colon (at protein level).

The protein resides in the nucleus. It localises to the PML body. Its subcellular location is the nucleoplasm. It carries out the reaction L-seryl-[protein] + ATP = O-phospho-L-seryl-[protein] + ADP + H(+). It catalyses the reaction L-threonyl-[protein] + ATP = O-phospho-L-threonyl-[protein] + ADP + H(+). Activated through phosphorylation at Thr-68 by ATM in response to DNA double-strand breaks. Activation is modulated by several mediators including MDC1 and TP53BP1. Induces homodimerization with exchange of the T-loop/activation segment between protomers and transphosphorylation of the protomers. The autophosphorylated kinase dimer is fully active. Negatively regulated by PPM1D through dephosphorylation of Thr-68. In terms of biological role, serine/threonine-protein kinase which is required for checkpoint-mediated cell cycle arrest, activation of DNA repair and apoptosis in response to the presence of DNA double-strand breaks. May also negatively regulate cell cycle progression during unperturbed cell cycles. Following activation, phosphorylates numerous effectors preferentially at the consensus sequence [L-X-R-X-X-S/T]. Regulates cell cycle checkpoint arrest through phosphorylation of CDC25A, CDC25B and CDC25C, inhibiting their activity. Inhibition of CDC25 phosphatase activity leads to increased inhibitory tyrosine phosphorylation of CDK-cyclin complexes and blocks cell cycle progression. May also phosphorylate NEK6 which is involved in G2/M cell cycle arrest. Regulates DNA repair through phosphorylation of BRCA2, enhancing the association of RAD51 with chromatin which promotes DNA repair by homologous recombination. Also stimulates the transcription of genes involved in DNA repair (including BRCA2) through the phosphorylation and activation of the transcription factor FOXM1. Regulates apoptosis through the phosphorylation of p53/TP53, MDM4 and PML. Phosphorylation of p53/TP53 at 'Ser-20' by CHEK2 may alleviate inhibition by MDM2, leading to accumulation of active p53/TP53. Phosphorylation of MDM4 may also reduce degradation of p53/TP53. Also controls the transcription of pro-apoptotic genes through phosphorylation of the transcription factor E2F1. Tumor suppressor, it may also have a DNA damage-independent function in mitotic spindle assembly by phosphorylating BRCA1. Its absence may be a cause of the chromosomal instability observed in some cancer cells. Promotes the CCAR2-SIRT1 association and is required for CCAR2-mediated SIRT1 inhibition. Under oxidative stress, promotes ATG7 ubiquitination by phosphorylating the E3 ubiquitin ligase TRIM32 at 'Ser-56' leading to positive regulation of the autophagosme assembly. The polypeptide is Serine/threonine-protein kinase Chk2 (Mus musculus (Mouse)).